Reading from the N-terminus, the 92-residue chain is Phospholemman (92 aa).

An N-terminal signal peptide occupies residues 1–20 (MASLGHILVFCVGLLTMAKA). Over 21–35 (ESPKEHDPFTYDYQS) the chain is Extracellular. A helical transmembrane segment spans residues 36–56 (LQIGGLVIAGILFILGILIVL). Over 57–92 (SRRCRCKFNQQQRTGEPDEEEGTFRSSIRRLSTRRR) the chain is Cytoplasmic. Residue Cys-60 is the site of S-palmitoyl cysteine attachment. S-glutathionyl cysteine; alternate is present on Cys-62. Cys-62 carries the S-palmitoyl cysteine; alternate lipid modification. Residues 65 to 92 (NQQQRTGEPDEEEGTFRSSIRRLSTRRR) are disordered. Thr-79 is modified (phosphothreonine). At Ser-82 the chain carries Phosphoserine. Ser-83 bears the Phosphoserine; by PKA and PKC mark. Positions 83–92 (SIRRLSTRRR) are enriched in basic residues. Phosphoserine; by PKA is present on Ser-88. Position 89 is a phosphothreonine; by PKC (Thr-89).

This sequence belongs to the FXYD family. As to quaternary structure, homotetramer. Monomer. Regulatory subunit of the sodium/potassium-transporting ATPase (NKA) which is composed of a catalytic alpha subunit, an auxiliary non-catalytic beta subunit and an additional regulatory subunit. The monomeric form associates with NKA while the oligomeric form does not. Interacts with the catalytic alpha-1 subunit ATP1A1. Also interacts with the catalytic alpha-2 and alpha-3 subunits ATP1A2 and ATP1A3. Very little interaction with ATP1A1, ATP1A2 or ATP1A3 when phosphorylated at Ser-83. Interacts with the non-catalytic beta-1 subunit ATP1B1. Oxidative stress decreases interaction with ATP1A1 but increases interaction with ATP1B1. Major plasma membrane substrate for cAMP-dependent protein kinase (PKA) and protein kinase C (PKC) in several different tissues. Phosphorylated in response to insulin and adrenergic stimulation. Phosphorylation at Ser-88 stimulates sodium/potassium-transporting ATPase activity while the unphosphorylated form inhibits sodium/potassium-transporting ATPase activity. Phosphorylation increases tetramerization, decreases binding to ATP1A1 and reduces inhibition of ATP1A1 activity. Phosphorylation at Ser-83 leads to greatly reduced interaction with ATP1A1, ATP1A2 and ATP1A3. May be phosphorylated by DMPK. Post-translationally, palmitoylation increases half-life and stability and is enhanced upon phosphorylation at Ser-88 by PKA. In terms of tissue distribution, highest expression in skeletal muscle and heart. Moderate levels in brain, placenta, lung, liver, pancreas, uterus, bladder, prostate, small intestine and colon with mucosal lining. Very low levels in kidney, colon and small intestine without mucosa, prostate without endothelial lining, spleen, and testis.

Its subcellular location is the cell membrane. It is found in the sarcolemma. The protein localises to the apical cell membrane. It localises to the membrane. The protein resides in the caveola. Its subcellular location is the T-tubule. In terms of biological role, associates with and regulates the activity of the sodium/potassium-transporting ATPase (NKA) which transports Na(+) out of the cell and K(+) into the cell. Inhibits NKA activity in its unphosphorylated state and stimulates activity when phosphorylated. Reduces glutathionylation of the NKA beta-1 subunit ATP1B1, thus reversing glutathionylation-mediated inhibition of ATP1B1. Contributes to female sexual development by maintaining the excitability of neurons which secrete gonadotropin-releasing hormone. The chain is Phospholemman from Homo sapiens (Human).